Here is a 727-residue protein sequence, read N- to C-terminus: Sodium-dependent neutral amino acid transporter SLC6A17 (727 aa).

Residues 1–68 are Cytoplasmic-facing; it reads MPKNSKVTQR…DRPAWNSKLQ (68 aa). 2 positions are modified to phosphoserine: serine 13 and serine 20. A helical transmembrane segment spans residues 69-89; it reads YILAQIGFSVGLGNIWRFPYL. The Extracellular portion of the chain corresponds to 90–96; it reads CQKNGGG. Residues 97 to 116 form a helical membrane-spanning segment; it reads AYLVPYLVLLIIIGIPLFFL. Over 117–140 the chain is Cytoplasmic; that stretch reads ELAVGQRIRRGSIGVWHYVCPRLG. A helical transmembrane segment spans residues 141-161; the sequence is GIGFSSCIVCLFVGLYYNVII. Residues 162–224 are Extracellular-facing; sequence GWSVFYFFKS…NSISESGGLN (63 aa). N-linked (GlcNAc...) asparagine glycosylation is present at asparagine 186. The helical transmembrane segment at 225 to 243 threads the bilayer; that stretch reads WKMTLCLLVAWSIVGMAVV. The Cytoplasmic portion of the chain corresponds to 244 to 251; it reads KGIQSSGK. The helical transmembrane segment at 252-269 threads the bilayer; the sequence is VMYFSSLFPYVVLACFLV. The Extracellular portion of the chain corresponds to 270–304; that stretch reads RGLLLRGAVDGILHMFTPKLDKMLDPQVWREAATQ. A helical membrane pass occupies residues 305–322; the sequence is VFFALGLGFGGVIAFSSY. At 323-333 the chain is on the cytoplasmic side; sequence NKQDNNCHFDA. Residues 334–355 traverse the membrane as a helical segment; it reads ALVSFINFFTSVLATLVVFAVL. The Extracellular portion of the chain corresponds to 356–451; sequence GFKANIMNEK…FIAFTEAMTH (96 aa). Residue tyrosine 377 is modified to Phosphotyrosine. A glycan (N-linked (GlcNAc...) asparagine) is linked at asparagine 393. The helical transmembrane segment at 452-471 threads the bilayer; sequence FPASPFWSVMFFLMLINLGL. Residues 472–494 are Cytoplasmic-facing; the sequence is GSMIGTMAGITTPIIDTFKVPKE. The helical transmembrane segment at 495-513 threads the bilayer; sequence MFTVGCCVFAFFVGLLFVQ. Residues 514–528 are Extracellular-facing; sequence RSGNYFVTMFDDYSA. A helical membrane pass occupies residues 529-549; it reads TLPLTVIVILENIAVAWIYGT. At 550–569 the chain is on the cytoplasmic side; that stretch reads KKFMQELTEMLGFQPYRFYF. A helical membrane pass occupies residues 570–591; sequence YMWKFVSPLCMAVLTTASIIQL. Topologically, residues 592 to 618 are extracellular; it reads GVSPPGYSAWIKEEAAERYLYFPNWAM. The helical transmembrane segment at 619–641 threads the bilayer; the sequence is ALLITLIAVATLPIPVVFILRHF. Residues 642-727 lie on the Cytoplasmic side of the membrane; that stretch reads HLLSDGSNTL…LLASTPESEL (86 aa). Residues serine 665 and serine 701 each carry the phosphoserine modification. A disordered region spans residues 680-727; sequence VPSEAPSPMPTHRSYLGPGSTSPLDNSNNPNGRYGSGYLLASTPESEL. Positions 698–710 are enriched in polar residues; it reads GSTSPLDNSNNPN.

The protein belongs to the sodium:neurotransmitter symporter (SNF) (TC 2.A.22) family. In terms of tissue distribution, expressed in the brain. The strongest expression levels in embryonic, postnatal, and adult stages are found in both cortical and hippocampal tissues.

It localises to the cytoplasmic vesicle. The protein resides in the secretory vesicle. It is found in the synaptic vesicle membrane. Its subcellular location is the postsynapse. The protein localises to the presynapse. It catalyses the reaction L-proline(in) + Na(+)(in) = L-proline(out) + Na(+)(out). The enzyme catalyses L-leucine(in) + Na(+)(in) = L-leucine(out) + Na(+)(out). It carries out the reaction glycine(in) + Na(+)(in) = glycine(out) + Na(+)(out). The catalysed reaction is L-alanine(in) + Na(+)(in) = L-alanine(out) + Na(+)(out). It catalyses the reaction L-glutamine(in) + Na(+)(in) = L-glutamine(out) + Na(+)(out). Functionally, synaptic vesicle transporter with apparent selectivity for neutral amino acids. The transport is sodium-coupled but chloride-independent, likely driven by the proton electrochemical gradient generated by vacuolar H(+)-ATPase in an overall electrogenic mechanism. May contribute to the synaptic uptake of neurotransmitter precursors in a process coupled in part to vesicle exocytosis. The protein is Sodium-dependent neutral amino acid transporter SLC6A17 of Mus musculus (Mouse).